A 331-amino-acid polypeptide reads, in one-letter code: FMRFamide-related neuropeptides (331 aa).

A signal peptide spans 1-25; that stretch reads MRCWSPCSLLVVIAIYCLSSHTSEA. Residues 26-65 constitute a propeptide that is removed on maturation; sequence FDLAQACVESQRLSLLPICDTIFAVQQEGAQQSADDGLRS. Phenylalanine amide is present on residues Phe71 and Phe83. Positions 86 to 94 are excised as a propeptide; that stretch reads NVPDLPFED. The residue at position 100 (Phe100) is a Phenylalanine amide. Residues 103-168 constitute a propeptide that is removed on maturation; sequence AAPQLDDLLK…YVDDVEDSDV (66 aa). The interval 122 to 153 is disordered; the sequence is QKSDDTSVRRKRSTDAAPQSNTDSAEQKNDSA. Residues Phe174 and Phe181 each carry the phenylalanine amide modification. A propeptide spanning residues 184 to 194 is cleaved from the precursor; sequence NPSDVGSKLTE. At Phe200 the chain carries Phenylalanine amide. Positions 203-205 are excised as a propeptide; sequence DPE. A Phenylalanine amide modification is found at Phe211. Residues 214–216 constitute a propeptide that is removed on maturation; the sequence is SDD. At Phe222 the chain carries Phenylalanine amide. The propeptide occupies 225–236; sequence NPGDAEDELEED. A Phenylalanine amide modification is found at Phe242. Residues 245 to 254 constitute a propeptide that is removed on maturation; that stretch reads GDEEDEEEAE. Phe260 is modified (phenylalanine amide). A propeptide spanning residues 263–265 is cleaved from the precursor; it reads DPE. Phenylalanine amide is present on Phe271. A propeptide spanning residues 274 to 277 is cleaved from the precursor; that stretch reads NGEE. Phe283 bears the Phenylalanine amide mark. A propeptide spanning residues 286–293 is cleaved from the precursor; the sequence is NPEEPEAD. Phe299 is modified (phenylalanine amide). Positions 302-312 are excised as a propeptide; that stretch reads GGEEDDVNTEE. Phe318 carries the post-translational modification Phenylalanine amide. A propeptide spanning residues 321-331 is cleaved from the precursor; that stretch reads SAEKCKGCLEG.

It belongs to the FARP (FMRFamide related peptide) family. As to expression, present ubiquitously in the brain and regions of the central nervous system as well as in the periphery and throughout the dermal chromatophore layer (at protein level).

Its subcellular location is the secreted. Its function is as follows. Excitatory neurotransmitters that directly modulate chromatophore function by activating chromatophore expansion at the chromatophore neuromuscular junction. The chain is FMRFamide-related neuropeptides from Sepia officinalis (Common cuttlefish).